We begin with the raw amino-acid sequence, 209 residues long: 8-oxoguanine DNA glycosylase/AP lyase (209 aa).

Residues lysine 131 and aspartate 149 contribute to the active site.

It belongs to the type-2 OGG1 family.

It catalyses the reaction 2'-deoxyribonucleotide-(2'-deoxyribose 5'-phosphate)-2'-deoxyribonucleotide-DNA = a 3'-end 2'-deoxyribonucleotide-(2,3-dehydro-2,3-deoxyribose 5'-phosphate)-DNA + a 5'-end 5'-phospho-2'-deoxyribonucleoside-DNA + H(+). Its function is as follows. Catalyzes the excision of an oxidatively damaged form of guanine (7,8-dihydro-8-oxoguanine = 8-oxoG) from DNA. Also cleaves the DNA backbone at apurinic/apyrimidinic sites (AP sites). This is 8-oxoguanine DNA glycosylase/AP lyase from Korarchaeum cryptofilum (strain OPF8).